A 1186-amino-acid chain; its full sequence is DNA-directed RNA polymerase subunit beta (1186 aa).

The tract at residues 1149–1186 (KEEDDDPSTSSDDLGFNIGARPDAAAKEDQVAEEPEFQ) is disordered.

The protein belongs to the RNA polymerase beta chain family. As to quaternary structure, the RNAP catalytic core consists of 2 alpha, 1 beta, 1 beta' and 1 omega subunit. When a sigma factor is associated with the core the holoenzyme is formed, which can initiate transcription.

The enzyme catalyses RNA(n) + a ribonucleoside 5'-triphosphate = RNA(n+1) + diphosphate. In terms of biological role, DNA-dependent RNA polymerase catalyzes the transcription of DNA into RNA using the four ribonucleoside triphosphates as substrates. The sequence is that of DNA-directed RNA polymerase subunit beta from Bifidobacterium adolescentis (strain ATCC 15703 / DSM 20083 / NCTC 11814 / E194a).